The chain runs to 376 residues: Putative glutamate--cysteine ligase 2-1 (376 aa).

Belongs to the glutamate--cysteine ligase type 2 family. YbdK subfamily.

It catalyses the reaction L-cysteine + L-glutamate + ATP = gamma-L-glutamyl-L-cysteine + ADP + phosphate + H(+). ATP-dependent carboxylate-amine ligase which exhibits weak glutamate--cysteine ligase activity. This Rubrobacter xylanophilus (strain DSM 9941 / JCM 11954 / NBRC 16129 / PRD-1) protein is Putative glutamate--cysteine ligase 2-1.